The chain runs to 174 residues: Small ribosomal subunit protein uS5 (174 aa).

An S5 DRBM domain is found at 16–79; sequence LSELLVSVRR…NAAKKSMIRV (64 aa).

The protein belongs to the universal ribosomal protein uS5 family. Part of the 30S ribosomal subunit. Contacts proteins S4 and S8.

Functionally, with S4 and S12 plays an important role in translational accuracy. Located at the back of the 30S subunit body where it stabilizes the conformation of the head with respect to the body. This is Small ribosomal subunit protein uS5 from Anaplasma marginale (strain Florida).